We begin with the raw amino-acid sequence, 236 residues long: Transmembrane protein 65 (236 aa).

Residues 1–57 (MSRLLPLLRSRTARSLRPGPAAAAAPRPPSWCCCGRGLLALAAPGGPRALGTHPKKE) constitute a mitochondrion transit peptide. Residues 58 to 106 (PIEALNTAQGARDFIYSLHSSERSCLLKELHRFESIAIAQEKLEAQPPT) lie on the Cytoplasmic side of the membrane. Residues 107–127 (PGQLRYVFIHNAIPFIGFGFL) traverse the membrane as a helical segment. Topologically, residues 128-138 (DNAIMIVAGTH) are extracellular. A helical membrane pass occupies residues 139-161 (IELSIGIILGISTMAAAALGNLV). Topologically, residues 162–205 (SDLAGLGLAGYVEALASRLGLSIPDLSPKQVDMWQTRVSSHLGK) are cytoplasmic. The helical transmembrane segment at 206–226 (AVGVTIGCILGMFPLIFFGGG) threads the bilayer. The Extracellular segment spans residues 227–236 (EDDEKLEKKN).

Monomer. Homodimer. Interacts with GJA1. Interacts weakly with DSP. Interacts with SCN1B.

The protein localises to the cell membrane. It is found in the mitochondrion inner membrane. In terms of biological role, essential for maintaining proper cardiac intercalated disk (ICD) structure and function as well as cardiac conduction velocity in the heart. Its association with SCN1B is required for stabilizing the perinexus in the ICD and for localization of GJA1 and SCN5A to the ICD. May regulate the function of the gap junction protein GJA1 and may contribute to the stability and proper localization of GJA1 to cardiac intercalated disk thereby regulating gap junction communication. Regulates mitochondrial respiration and mitochondrial DNA copy number maintenance. This Bos taurus (Bovine) protein is Transmembrane protein 65 (TMEM65).